A 122-amino-acid chain; its full sequence is Large ribosomal subunit protein uL14 (122 aa).

This sequence belongs to the universal ribosomal protein uL14 family. As to quaternary structure, part of the 50S ribosomal subunit. Forms a cluster with proteins L3 and L19. In the 70S ribosome, L14 and L19 interact and together make contacts with the 16S rRNA in bridges B5 and B8.

Functionally, binds to 23S rRNA. Forms part of two intersubunit bridges in the 70S ribosome. In Mycolicibacterium gilvum (strain PYR-GCK) (Mycobacterium gilvum (strain PYR-GCK)), this protein is Large ribosomal subunit protein uL14.